Reading from the N-terminus, the 526-residue chain is Anthranilate synthase component 1 (526 aa).

Residues Ser-40 and 304–306 (PYM) contribute to the L-tryptophan site. 341–342 (GT) serves as a coordination point for chorismate. Residue Glu-374 participates in Mg(2+) binding. Chorismate contacts are provided by residues Tyr-461, Arg-481, 495-497 (GAG), and Gly-497. Glu-510 provides a ligand contact to Mg(2+).

It belongs to the anthranilate synthase component I family. In terms of assembly, heterotetramer consisting of two non-identical subunits: a beta subunit (TrpG) and a large alpha subunit (TrpE). Mg(2+) serves as cofactor.

The enzyme catalyses chorismate + L-glutamine = anthranilate + pyruvate + L-glutamate + H(+). Its pathway is amino-acid biosynthesis; L-tryptophan biosynthesis; L-tryptophan from chorismate: step 1/5. Feedback inhibited by tryptophan. In terms of biological role, part of a heterotetrameric complex that catalyzes the two-step biosynthesis of anthranilate, an intermediate in the biosynthesis of L-tryptophan. In the first step, the glutamine-binding beta subunit (TrpG) of anthranilate synthase (AS) provides the glutamine amidotransferase activity which generates ammonia as a substrate that, along with chorismate, is used in the second step, catalyzed by the large alpha subunit of AS (TrpE) to produce anthranilate. In the absence of TrpG, TrpE can synthesize anthranilate directly from chorismate and high concentrations of ammonia. The polypeptide is Anthranilate synthase component 1 (trpE) (Buchnera aphidicola subsp. Tetraneura caerulescens).